A 90-amino-acid chain; its full sequence is Small ribosomal subunit protein bS16 (90 aa).

Belongs to the bacterial ribosomal protein bS16 family.

This chain is Small ribosomal subunit protein bS16, found in Streptococcus sanguinis (strain SK36).